The following is a 140-amino-acid chain: Lysozyme E (140 aa).

Positions 1 to 18 are cleaved as a signal peptide; sequence MKAFIVLVALAMAAPALG. The region spanning 19 to 140 is the C-type lysozyme domain; it reads RTLDRCSLAR…GWLPSIDGCF (122 aa). Cystine bridges form between Cys24–Cys139, Cys45–Cys129, Cys80–Cys96, and Cys92–Cys110. Residues Glu50 and Asp68 contribute to the active site.

The protein belongs to the glycosyl hydrolase 22 family. As to expression, found in the midgut.

It carries out the reaction Hydrolysis of (1-&gt;4)-beta-linkages between N-acetylmuramic acid and N-acetyl-D-glucosamine residues in a peptidoglycan and between N-acetyl-D-glucosamine residues in chitodextrins.. Its function is as follows. Unlikely to play an active role in the humoral immune defense. May have a function in the digestion of bacteria in the food. This is Lysozyme E (LysE) from Drosophila melanogaster (Fruit fly).